The following is a 141-amino-acid chain: Hemoglobin subunit alpha (141 aa).

The Globin domain occupies 1–141 (VLSSKDKTNV…VSTVLTSKYR (141 aa)). Position 3 is a phosphoserine (Ser-3). An N6-succinyllysine modification is found at Lys-7. The residue at position 8 (Thr-8) is a Phosphothreonine. At Lys-11 the chain carries N6-succinyllysine. Lys-16 is modified (N6-acetyllysine; alternate). N6-succinyllysine; alternate is present on Lys-16. Tyr-24 is subject to Phosphotyrosine. Lys-40 carries the post-translational modification N6-succinyllysine. Ser-49 bears the Phosphoserine mark. His-58 is a binding site for O2. His-87 lines the heme b pocket. Ser-102 carries the phosphoserine modification. Thr-108 is subject to Phosphothreonine. Ser-124 is modified (phosphoserine). 2 positions are modified to phosphothreonine: Thr-134 and Thr-137. A Phosphoserine modification is found at Ser-138.

It belongs to the globin family. In terms of assembly, heterotetramer of two alpha chains and two beta chains. As to expression, red blood cells.

Its function is as follows. Involved in oxygen transport from the lung to the various peripheral tissues. In terms of biological role, hemopressin acts as an antagonist peptide of the cannabinoid receptor CNR1. Hemopressin-binding efficiently blocks cannabinoid receptor CNR1 and subsequent signaling. The polypeptide is Hemoglobin subunit alpha (HBA) (Camelus dromedarius (Dromedary)).